Reading from the N-terminus, the 75-residue chain is MARYFRRRKFCRFTTEGVVEIDYKDIATLKNYITESGKIVPSRITGTRAKYQRQLARAIKRARYLSLLPYTDRHQ.

Belongs to the bacterial ribosomal protein bS18 family. As to quaternary structure, part of the 30S ribosomal subunit. Forms a tight heterodimer with protein bS6.

Binds as a heterodimer with protein bS6 to the central domain of the 16S rRNA, where it helps stabilize the platform of the 30S subunit. This Sodalis glossinidius (strain morsitans) protein is Small ribosomal subunit protein bS18.